We begin with the raw amino-acid sequence, 152 residues long: Large ribosomal subunit protein bL9 (152 aa).

It belongs to the bacterial ribosomal protein bL9 family.

Functionally, binds to the 23S rRNA. In Mycobacterium avium (strain 104), this protein is Large ribosomal subunit protein bL9.